A 257-amino-acid chain; its full sequence is 4-hydroxy-tetrahydrodipicolinate reductase (257 aa).

NAD(+) is bound by residues 7–12, Asp-32, 91–93, and 115–118; these read GAAGRM, GTT, and SPNF. Catalysis depends on His-147, which acts as the Proton donor/acceptor. His-148 lines the (S)-2,3,4,5-tetrahydrodipicolinate pocket. Catalysis depends on Lys-151, which acts as the Proton donor. 157–158 contributes to the (S)-2,3,4,5-tetrahydrodipicolinate binding site; that stretch reads GT.

The protein belongs to the DapB family.

It is found in the cytoplasm. It carries out the reaction (S)-2,3,4,5-tetrahydrodipicolinate + NAD(+) + H2O = (2S,4S)-4-hydroxy-2,3,4,5-tetrahydrodipicolinate + NADH + H(+). The catalysed reaction is (S)-2,3,4,5-tetrahydrodipicolinate + NADP(+) + H2O = (2S,4S)-4-hydroxy-2,3,4,5-tetrahydrodipicolinate + NADPH + H(+). Its pathway is amino-acid biosynthesis; L-lysine biosynthesis via DAP pathway; (S)-tetrahydrodipicolinate from L-aspartate: step 4/4. Its function is as follows. Catalyzes the conversion of 4-hydroxy-tetrahydrodipicolinate (HTPA) to tetrahydrodipicolinate. The sequence is that of 4-hydroxy-tetrahydrodipicolinate reductase from Archaeoglobus fulgidus (strain ATCC 49558 / DSM 4304 / JCM 9628 / NBRC 100126 / VC-16).